The following is a 535-amino-acid chain: Beta-amylase (535 aa).

Positions 51, 91, and 99 each coordinate substrate. The active-site Proton donor is Glu184. Positions 293, 298, and 340 each coordinate substrate. The active-site Proton acceptor is Glu378. Substrate contacts are provided by residues 379-380 and Arg418; that span reads NA. Repeat copies occupy residues 489–499, 500–510, and 511–521. Residues 489-532 form a 4 X 11 AA tandem repeats region; sequence GPTGGMGGQAEGPTCGMGGQVKGPTGGMGGQAEDPTSGIGGELP. Residues 513–535 form a disordered region; that stretch reads TGGMGGQAEDPTSGIGGELPATM. Residues 522–532 form a 4; approximate repeat; it reads DPTSGIGGELP.

This sequence belongs to the glycosyl hydrolase 14 family. As to quaternary structure, monomer.

It carries out the reaction Hydrolysis of (1-&gt;4)-alpha-D-glucosidic linkages in polysaccharides so as to remove successive maltose units from the non-reducing ends of the chains.. This Hordeum vulgare (Barley) protein is Beta-amylase (BMY1).